The chain runs to 373 residues: Peptide chain release factor 1-like, mitochondrial (373 aa).

A mitochondrion-targeting transit peptide spans 1-25 (MRSGFLSGARRLWARRAFSRTPPPS). The stretch at 56–110 (QLAAAARLLSEKERELRDTESLLHDENEDLKKLAESEIALCQKQITELKHQIISL) forms a coiled coil. The segment at 229 to 293 (PKDLRIDTKR…LRARLYSMHL (65 aa)) is GGQ domain. Residues 243–245 (GGQ) carry the GGQ motif. Glutamine 245 is subject to N5-methylglutamine.

It belongs to the prokaryotic/mitochondrial release factor family. Post-translationally, methylation of glutamine in the GGQ triplet by HEMK1 is conserved from bacteria to mammals.

It localises to the mitochondrion. Functionally, mitochondrial peptide chain release factor that directs the termination of translation in response to the peptide chain termination codons UAA and UAG. In Mus musculus (Mouse), this protein is Peptide chain release factor 1-like, mitochondrial (Mtrf1l).